The primary structure comprises 383 residues: Chromatin structure-remodeling complex subunit SFH1 (383 aa).

Residues Asp61–His80 are disordered. The segment covering Glu64–His80 has biased composition (basic and acidic residues).

The protein belongs to the SNF5 family.

Its subcellular location is the nucleus. In terms of biological role, part of the chromatin structure-remodeling complex (RSC) which is involved in transcription regulation and nucleosome positioning. RSC is responsible for the transfer of a histone octamer from a nucleosome core particle to naked DNA. The reaction requires ATP and involves an activated RSC-nucleosome intermediate. Remodeling reaction also involves DNA translocation, DNA twist and conformational change. As a reconfigurer of centromeric and flanking nucleosomes, RSC complex is required both for proper kinetochore function in chromosome segregation and, via a PKC1-dependent signaling pathway, for organization of the cellular cytoskeleton. This subunit is essential for mitotic growth and required for cell cycle progression. The polypeptide is Chromatin structure-remodeling complex subunit SFH1 (SFH1) (Eremothecium gossypii (strain ATCC 10895 / CBS 109.51 / FGSC 9923 / NRRL Y-1056) (Yeast)).